The primary structure comprises 37 residues: Large ribosomal subunit protein bL36c (37 aa).

The protein belongs to the bacterial ribosomal protein bL36 family.

Its subcellular location is the plastid. It localises to the chloroplast. In Mesembryanthemum crystallinum (Common ice plant), this protein is Large ribosomal subunit protein bL36c.